The chain runs to 246 residues: Uroporphyrinogen-III synthase (246 aa).

The protein belongs to the uroporphyrinogen-III synthase family. Monomer.

It carries out the reaction hydroxymethylbilane = uroporphyrinogen III + H2O. Its pathway is porphyrin-containing compound metabolism; protoporphyrin-IX biosynthesis; coproporphyrinogen-III from 5-aminolevulinate: step 3/4. Catalyzes cyclization of the linear tetrapyrrole, hydroxymethylbilane, to the macrocyclic uroporphyrinogen III. This chain is Uroporphyrinogen-III synthase (hemD), found in Escherichia coli (strain K12).